A 242-amino-acid polypeptide reads, in one-letter code: ATP-dependent dethiobiotin synthetase BioD (242 aa).

Residue 12-17 (EVGKTV) coordinates ATP. Mg(2+) is bound at residue threonine 16. Lysine 37 is an active-site residue. Serine 41 is a substrate binding site. Residues aspartate 51 and 112–115 (EGAG) contribute to the ATP site. Residues aspartate 51 and glutamate 112 each contribute to the Mg(2+) site.

It belongs to the dethiobiotin synthetase family. In terms of assembly, homodimer. It depends on Mg(2+) as a cofactor.

It localises to the cytoplasm. It carries out the reaction (7R,8S)-7,8-diammoniononanoate + CO2 + ATP = (4R,5S)-dethiobiotin + ADP + phosphate + 3 H(+). Its pathway is cofactor biosynthesis; biotin biosynthesis; biotin from 7,8-diaminononanoate: step 1/2. Catalyzes a mechanistically unusual reaction, the ATP-dependent insertion of CO2 between the N7 and N8 nitrogen atoms of 7,8-diaminopelargonic acid (DAPA, also called 7,8-diammoniononanoate) to form a ureido ring. The chain is ATP-dependent dethiobiotin synthetase BioD from Bacillus thuringiensis (strain Al Hakam).